Reading from the N-terminus, the 158-residue chain is Transcription elongation factor GreA (158 aa).

Positions 48-75 form a coiled coil; that stretch reads NSEYDSAKEDQAFVEGRIAQLEKMIRNA.

The protein belongs to the GreA/GreB family.

Its function is as follows. Necessary for efficient RNA polymerase transcription elongation past template-encoded arresting sites. The arresting sites in DNA have the property of trapping a certain fraction of elongating RNA polymerases that pass through, resulting in locked ternary complexes. Cleavage of the nascent transcript by cleavage factors such as GreA or GreB allows the resumption of elongation from the new 3'terminus. GreA releases sequences of 2 to 3 nucleotides. The polypeptide is Transcription elongation factor GreA (Shouchella clausii (strain KSM-K16) (Alkalihalobacillus clausii)).